Reading from the N-terminus, the 104-residue chain is Large ribosomal subunit protein uL24 (104 aa).

The protein belongs to the universal ribosomal protein uL24 family. Part of the 50S ribosomal subunit.

Its function is as follows. One of two assembly initiator proteins, it binds directly to the 5'-end of the 23S rRNA, where it nucleates assembly of the 50S subunit. In terms of biological role, one of the proteins that surrounds the polypeptide exit tunnel on the outside of the subunit. This chain is Large ribosomal subunit protein uL24, found in Corynebacterium aurimucosum (strain ATCC 700975 / DSM 44827 / CIP 107346 / CN-1) (Corynebacterium nigricans).